A 413-amino-acid polypeptide reads, in one-letter code: Snake venom metalloproteinase AaPA (413 aa).

Positions 1–20 (MIQVLLVTICLAAFPYQGSS) are cleaved as a signal peptide. Positions 21–189 (IILESGKVND…KKASQLIVST (169 aa)) are excised as a propeptide. The Peptidase M12B domain maps to 193–390 (RYMEIVIVVD…ENPPCILNKP (198 aa)). Residues Glu-196 and Asp-280 each coordinate Ca(2+). 3 cysteine pairs are disulfide-bonded: Cys-304–Cys-385, Cys-344–Cys-369, and Cys-346–Cys-352. A Zn(2+)-binding site is contributed by His-329. Glu-330 is a catalytic residue. Positions 333 and 339 each coordinate Zn(2+). Cys-385, Asn-388, Val-400, Asn-403, Leu-405, Glu-407, and Asp-413 together coordinate Ca(2+). The propeptide occupies 391 to 413 (LRTDTVSTPVSGNELLEAEKDYD).

This sequence belongs to the venom metalloproteinase (M12B) family. P-I subfamily. As to quaternary structure, monomer. The cofactor is Zn(2+). Expressed by the venom gland.

The protein localises to the secreted. Snake venom zinc metalloprotease that may activate prothrombin. This chain is Snake venom metalloproteinase AaPA, found in Deinagkistrodon acutus (Hundred-pace snake).